The sequence spans 2030 residues: Dedicator of cytokinesis protein 3 (2030 aa).

Residues 6-67 (EEEKYGVVIC…PANYIHLKKA (62 aa)) enclose the SH3 domain. A C2 DOCK-type domain is found at 421–599 (RNDLYLTLEK…ESFFISTQLS (179 aa)). In terms of domain architecture, DOCKER spans 1228–1635 (KSEINKEEMY…LYHEFPGLDK (408 aa)). 4 disordered regions span residues 1641 to 1662 (SGTSTPRGNVLASHSPMSPESI), 1734 to 1771 (SSSQASPSSSSLSSTHSAPSQMITSAPSSARGSPSLPD), 1849 to 1927 (DTPP…ADED), and 1951 to 2030 (QPCR…RGEQ). Phosphoserine is present on Ser-1658. Positions 1734–1754 (SSSQASPSSSSLSSTHSAPSQ) are enriched in low complexity. Residues 1755-1765 (MITSAPSSARG) are compositionally biased toward polar residues. Residues 1880 to 1902 (GSNSTLSGSASSGVSSLSESNFG) are compositionally biased toward low complexity. Positions 1967 to 1977 (PMDPPALPPKP) are enriched in pro residues. Positions 1970 to 1976 (PPALPPK) match the SH3-binding motif. Composition is skewed to basic and acidic residues over residues 1984 to 2001 (ALEHDEGVLLREETERPR) and 2014 to 2030 (AKEEQARMAWEHGRGEQ).

The protein belongs to the DOCK family. As to quaternary structure, interacts with presenilin proteins PSEN1 and PSEN2. Interacts with CRK. In terms of tissue distribution, in normal brains, it is localized in the neuropil, and occasionally in the pyramidal cells, while in Alzheimer disease brains, it is associated with neurofibrillary tangles.

The protein localises to the cytoplasm. In terms of biological role, potential guanine nucleotide exchange factor (GEF). GEF proteins activate some small GTPases by exchanging bound GDP for free GTP. Its interaction with presenilin proteins as well as its ability to stimulate Tau/MAPT phosphorylation suggest that it may be involved in Alzheimer disease. Ectopic expression in nerve cells decreases the secretion of amyloid-beta APBA1 protein and lowers the rate of cell-substratum adhesion, suggesting that it may affect the function of some small GTPase involved in the regulation of actin cytoskeleton or cell adhesion receptors. The polypeptide is Dedicator of cytokinesis protein 3 (DOCK3) (Homo sapiens (Human)).